Reading from the N-terminus, the 248-residue chain is Probable phosphatase VF_A0065 (248 aa).

H8, H10, H16, H41, E74, H102, H132, D194, and H196 together coordinate Zn(2+).

It belongs to the PHP family. Requires Zn(2+) as cofactor.

This is Probable phosphatase VF_A0065 from Aliivibrio fischeri (strain ATCC 700601 / ES114) (Vibrio fischeri).